The chain runs to 182 residues: Large ribosomal subunit protein uL10 (182 aa).

This sequence belongs to the universal ribosomal protein uL10 family. In terms of assembly, part of the ribosomal stalk of the 50S ribosomal subunit. The N-terminus interacts with L11 and the large rRNA to form the base of the stalk. The C-terminus forms an elongated spine to which L12 dimers bind in a sequential fashion forming a multimeric L10(L12)X complex.

Its function is as follows. Forms part of the ribosomal stalk, playing a central role in the interaction of the ribosome with GTP-bound translation factors. This chain is Large ribosomal subunit protein uL10, found in Leptothrix cholodnii (strain ATCC 51168 / LMG 8142 / SP-6) (Leptothrix discophora (strain SP-6)).